A 647-amino-acid polypeptide reads, in one-letter code: Spindle pole body-associated protein VIK1 (647 aa).

Residues 36 to 51 (NTTNTMNGSRPSSMKS) are compositionally biased toward polar residues. The segment at 36–55 (NTTNTMNGSRPSSMKSSLAL) is disordered. Positions 202-350 (DHEITEEISQ…SKQEKFYNDT (149 aa)) form a coiled coil.

In terms of assembly, interacts with KAR3; the interaction is direct.

It is found in the cytoplasm. The protein localises to the cytoskeleton. Its subcellular location is the microtubule organizing center. The protein resides in the spindle pole body. It localises to the nucleus. Its function is as follows. Together with the minus end-directed microtubule motor KAR3, plays a role in microtubule organization. Recruits KAR3 to microtubules, and together they may stabilize the polymers. The KAR3-VIK1 heterodimer cross-links anti-parallel microtubules. Targets and/or maintains KAR3 at the spindle pole body during vegetative growth. In Saccharomyces cerevisiae (strain ATCC 204508 / S288c) (Baker's yeast), this protein is Spindle pole body-associated protein VIK1 (VIK1).